A 344-amino-acid polypeptide reads, in one-letter code: GTP 3',8-cyclase (344 aa).

A Radical SAM core domain is found at 19–245 (PFGRAVTYLR…DIPYRTGGPA (227 aa)). Arg-28 contacts GTP. [4Fe-4S] cluster is bound by residues Cys-35 and Cys-39. Tyr-41 contributes to the S-adenosyl-L-methionine binding site. Cys-42 is a [4Fe-4S] cluster binding site. Arg-77 is a GTP binding site. Gly-81 contributes to the S-adenosyl-L-methionine binding site. Thr-111 contacts GTP. Ser-135 is a binding site for S-adenosyl-L-methionine. Lys-171 contributes to the GTP binding site. Met-205 is a binding site for S-adenosyl-L-methionine. Cys-268 and Cys-271 together coordinate [4Fe-4S] cluster. 273–275 (RVR) contacts GTP. Residue Cys-285 participates in [4Fe-4S] cluster binding.

Belongs to the radical SAM superfamily. MoaA family. As to quaternary structure, monomer and homodimer. The cofactor is [4Fe-4S] cluster.

The catalysed reaction is GTP + AH2 + S-adenosyl-L-methionine = (8S)-3',8-cyclo-7,8-dihydroguanosine 5'-triphosphate + 5'-deoxyadenosine + L-methionine + A + H(+). It participates in cofactor biosynthesis; molybdopterin biosynthesis. Its function is as follows. Catalyzes the cyclization of GTP to (8S)-3',8-cyclo-7,8-dihydroguanosine 5'-triphosphate. This Brucella melitensis biotype 2 (strain ATCC 23457) protein is GTP 3',8-cyclase.